We begin with the raw amino-acid sequence, 875 residues long: ATP-dependent helicase Lhr-Core (875 aa).

Residues Q35, K58, T59, D173, E174, I355, R372, and H375 each contribute to the ATP site. The Helicase ATP-binding domain maps to 39 to 230 (IPLIKQNYNV…FLVGKDREYR (192 aa)). The short motif at 173–176 (DEIH) is the DEIH box element. One can recognise a Helicase C-terminal domain in the interval 247-419 (PVKDLVHSSE…SIHIPKNPLD (173 aa)). The tract at residues 420 to 506 (VLSQIIVSAS…IFYTNSGTIP (87 aa)) is WH domain. The interval 507–875 (DEAMISVVTE…VNIELEYTSV (369 aa)) is domain 4.

This sequence belongs to the Lhr helicase family. Lhr-Core subfamily. In terms of assembly, monomer and homodimer. The monomeric form has helicase, ATPase and strand annealing activities, while the dimeric form only has ATPAse and strand annealing activities. Interacts with DNA topoisomerase 3 (topA).

It catalyses the reaction Couples ATP hydrolysis with the unwinding of duplex DNA by translocating in the 3'-5' direction.. The catalysed reaction is ATP + H2O = ADP + phosphate + H(+). DNA topoisomerase 3 (topA) inhibits helicase activity on Holliday junctions (HJ) but has no effect on ATPase activity. Its function is as follows. DNA helicase that translocates in a 3'-5' direction on single-stranded (ss)DNA, probably involved in DNA repair. Unwinds DNA in a 3'-5' direction, unwinding is ATP-dependent, acts preferentially on fork and 3'-tailed DNA; bubble and blunt-ended double-stranded (ds)DNA are not substrates. Has winding and unwinding activity, unwinds Holliday junction (HJ) DNA in the presence of ATP, the main product is forked DNA, single-stranded binding protein (SSB) does not stimulate activity. Anneals complementary oligonucleotides in an ATP-independent manner to form HJ and fork structures, thus can perform strand exchange. Preferentially binds HJ, forked and ssDNA, dsDNA is bound less well. LhrC-Core (Hel112) inhibits the exonuclease activity of the HerA-NurA complex on ss- and dsDNA, has no effect on ssDNA nicking by NurA; HerA-NurA are involved in DNA end-resection during DNA double-strand break repair. This is ATP-dependent helicase Lhr-Core from Saccharolobus solfataricus (strain ATCC 35092 / DSM 1617 / JCM 11322 / P2) (Sulfolobus solfataricus).